The chain runs to 119 residues: Cytochrome c55X (119 aa).

Positions 1 to 20 are cleaved as a signal peptide; that stretch reads MNAPPDFRRAASHALWLALA. Heme c is bound by residues Cys51, Cys54, and His55.

Binds 1 heme c group covalently per subunit.

The protein localises to the periplasm. In terms of biological role, monoheme c-type cytochrome. This is Cytochrome c55X (nirC) from Pseudomonas aeruginosa (strain ATCC 15692 / DSM 22644 / CIP 104116 / JCM 14847 / LMG 12228 / 1C / PRS 101 / PAO1).